A 170-amino-acid polypeptide reads, in one-letter code: RNA pyrophosphohydrolase (170 aa).

Residues 6-149 (GFRPNVGIIL…KRDVYRRALK (144 aa)) form the Nudix hydrolase domain. The short motif at 39–60 (GGIKHNESPENALYRELEEEVG) is the Nudix box element.

It belongs to the Nudix hydrolase family. RppH subfamily. It depends on a divalent metal cation as a cofactor.

In terms of biological role, accelerates the degradation of transcripts by removing pyrophosphate from the 5'-end of triphosphorylated RNA, leading to a more labile monophosphorylated state that can stimulate subsequent ribonuclease cleavage. The chain is RNA pyrophosphohydrolase from Saccharophagus degradans (strain 2-40 / ATCC 43961 / DSM 17024).